The primary structure comprises 494 residues: Probable cytochrome P450 518A1 (494 aa).

A helical membrane pass occupies residues 1-21 (MSILIILIISIIFYLIFDFLY). Cysteine 438 lines the heme pocket.

This sequence belongs to the cytochrome P450 family. Requires heme as cofactor.

It is found in the membrane. The sequence is that of Probable cytochrome P450 518A1 (cyp518A1) from Dictyostelium discoideum (Social amoeba).